A 440-amino-acid polypeptide reads, in one-letter code: Protein CyaD (440 aa).

Over 1 to 55 (MRRALRELAARHGRVLAASWRQRHRRPAGWFDPVETEFLPSALSLQERPISPTAR) the chain is Cytoplasmic. The chain crosses the membrane as a helical span at residues 56–75 (WLARILMALAAGALVWSVVG). Over 76–440 (KTEIVVHAAG…RHAGESLGER (365 aa)) the chain is Periplasmic.

The protein belongs to the membrane fusion protein (MFP) (TC 8.A.1) family.

The protein localises to the cell inner membrane. In terms of biological role, cyaD is necessary for transport of calmodulin-sensitive adenylate cyclase-hemolysin (cyclolysin). The sequence is that of Protein CyaD (cyaD) from Bordetella pertussis (strain ATCC 9797 / DSM 5571 / CCUG 30873 / LMG 14455 / NCTC 10739 / 18323).